The following is a 349-amino-acid chain: Anthranilate phosphoribosyltransferase (349 aa).

5-phospho-alpha-D-ribose 1-diphosphate is bound by residues Gly-82, 85-86 (GD), 92-95 (NVST), 110-118 (KHGNRGVSS), and Ser-122. Gly-82 is an anthranilate binding site. Ser-94 contributes to the Mg(2+) binding site. Asn-113 serves as a coordination point for anthranilate. Arg-168 is a binding site for anthranilate. 2 residues coordinate Mg(2+): Asp-227 and Glu-228.

It belongs to the anthranilate phosphoribosyltransferase family. Homodimer. Mg(2+) serves as cofactor.

It catalyses the reaction N-(5-phospho-beta-D-ribosyl)anthranilate + diphosphate = 5-phospho-alpha-D-ribose 1-diphosphate + anthranilate. The protein operates within amino-acid biosynthesis; L-tryptophan biosynthesis; L-tryptophan from chorismate: step 2/5. Functionally, catalyzes the transfer of the phosphoribosyl group of 5-phosphorylribose-1-pyrophosphate (PRPP) to anthranilate to yield N-(5'-phosphoribosyl)-anthranilate (PRA). In Acinetobacter baumannii (strain SDF), this protein is Anthranilate phosphoribosyltransferase.